A 115-amino-acid chain; its full sequence is Probable non-functional immunoglobulin heavy variable 3-38-3 (115 aa).

Positions 1–19 are cleaved as a signal peptide; sequence MQFVLSWVFLVAILKGVQC. Positions 20-44 are framework-1; sequence EVQLVESRGVLVQPGGSLRLSCAAS. Positions 31 to 115 constitute an Ig-like domain; that stretch reads VQPGGSLRLS…EDTAVYYCKK (85 aa). Cys41 and Cys113 are disulfide-bonded. Residues 45–52 are complementarity-determining-1; it reads GFTVSSNE. Positions 53–69 are framework-2; sequence MSWVRQAPGKGLEWVSS. The complementarity-determining-2 stretch occupies residues 70–75; that stretch reads ISGGST. A framework-3 region spans residues 76–113; the sequence is YYADSRKGRFTISRDNSKNTLHLQMNSLRAEDTAVYYC. A complementarity-determining-3 region spans residues 114-115; it reads KK.

As to quaternary structure, immunoglobulins are composed of two identical heavy chains and two identical light chains; disulfide-linked.

It is found in the secreted. The protein localises to the cell membrane. Probable non-functional open reading frame (ORF) of V region of the variable domain of immunoglobulin heavy chains. Non-functional ORF generally cannot participate in the synthesis of a productive immunoglobulin chain due to altered V-(D)-J or switch recombination and/or splicing site (at mRNA level) and/or conserved amino acid change (protein level). Immunoglobulins, also known as antibodies, are membrane-bound or secreted glycoproteins produced by B lymphocytes. In the recognition phase of humoral immunity, the membrane-bound immunoglobulins serve as receptors which, upon binding of a specific antigen, trigger the clonal expansion and differentiation of B lymphocytes into immunoglobulins-secreting plasma cells. Secreted immunoglobulins mediate the effector phase of humoral immunity, which results in the elimination of bound antigens. The antigen binding site is formed by the variable domain of one heavy chain, together with that of its associated light chain. Thus, each immunoglobulin has two antigen binding sites with remarkable affinity for a particular antigen. The variable domains are assembled by a process called V-(D)-J rearrangement and can then be subjected to somatic hypermutations which, after exposure to antigen and selection, allow affinity maturation for a particular antigen. In Homo sapiens (Human), this protein is Probable non-functional immunoglobulin heavy variable 3-38-3.